A 201-amino-acid chain; its full sequence is 3-isopropylmalate dehydratase small subunit (201 aa).

This sequence belongs to the LeuD family. LeuD type 1 subfamily. In terms of assembly, heterodimer of LeuC and LeuD.

The enzyme catalyses (2R,3S)-3-isopropylmalate = (2S)-2-isopropylmalate. It functions in the pathway amino-acid biosynthesis; L-leucine biosynthesis; L-leucine from 3-methyl-2-oxobutanoate: step 2/4. Catalyzes the isomerization between 2-isopropylmalate and 3-isopropylmalate, via the formation of 2-isopropylmaleate. This is 3-isopropylmalate dehydratase small subunit from Kineococcus radiotolerans (strain ATCC BAA-149 / DSM 14245 / SRS30216).